Reading from the N-terminus, the 726-residue chain is F-box protein COS111 (726 aa).

The region spanning 143–194 (FADINCLPEEIICRIIANLNDADSQRNCLLVSQEWSECAKRIIYKDVKFTST) is the F-box domain. Positions 276–295 (RSRTRRSSDASSMNSSVFSH) are disordered. Over residues 284 to 295 (DASSMNSSVFSH) the composition is skewed to low complexity.

Functionally, F-box protein probably involved in ubiquitin conjugation pathway. In Kluyveromyces lactis (strain ATCC 8585 / CBS 2359 / DSM 70799 / NBRC 1267 / NRRL Y-1140 / WM37) (Yeast), this protein is F-box protein COS111 (COS111).